An 878-amino-acid chain; its full sequence is Alanine--tRNA ligase (878 aa).

H566, H570, C668, and H672 together coordinate Zn(2+).

It belongs to the class-II aminoacyl-tRNA synthetase family. Zn(2+) serves as cofactor.

It localises to the cytoplasm. The enzyme catalyses tRNA(Ala) + L-alanine + ATP = L-alanyl-tRNA(Ala) + AMP + diphosphate. Functionally, catalyzes the attachment of alanine to tRNA(Ala) in a two-step reaction: alanine is first activated by ATP to form Ala-AMP and then transferred to the acceptor end of tRNA(Ala). Also edits incorrectly charged Ser-tRNA(Ala) and Gly-tRNA(Ala) via its editing domain. This Bacillus velezensis (strain DSM 23117 / BGSC 10A6 / LMG 26770 / FZB42) (Bacillus amyloliquefaciens subsp. plantarum) protein is Alanine--tRNA ligase.